The chain runs to 295 residues: Pantothenate synthetase (295 aa).

29-36 (MGALHSGH) is an ATP binding site. The active-site Proton donor is histidine 36. Glutamine 60 is a binding site for (R)-pantoate. Residue glutamine 60 coordinates beta-alanine. 158–161 (GQKD) contributes to the ATP binding site. Glutamine 164 provides a ligand contact to (R)-pantoate. ATP-binding positions include valine 187 and 195-198 (LSSR).

It belongs to the pantothenate synthetase family. In terms of assembly, homodimer.

Its subcellular location is the cytoplasm. The enzyme catalyses (R)-pantoate + beta-alanine + ATP = (R)-pantothenate + AMP + diphosphate + H(+). It participates in cofactor biosynthesis; (R)-pantothenate biosynthesis; (R)-pantothenate from (R)-pantoate and beta-alanine: step 1/1. Functionally, catalyzes the condensation of pantoate with beta-alanine in an ATP-dependent reaction via a pantoyl-adenylate intermediate. The protein is Pantothenate synthetase of Paenarthrobacter aurescens (strain TC1).